The chain runs to 177 residues: Putative membrane protein 165 (177 aa).

The Intravirion segment spans residues 1–7 (MYLVLLI). Residues 8-24 (AVILFIIVILMIFLISG) traverse the membrane as a helical segment. Residues 25 to 166 (LFYPEQEPAL…DPHPALKSKN (142 aa)) lie on the Virion surface side of the membrane.

It belongs to the asfivirus envelope protein p22 family.

The protein localises to the virion membrane. Its subcellular location is the host cell membrane. The chain is Putative membrane protein 165 from African swine fever virus (isolate Pig/Kenya/KEN-50/1950) (ASFV).